The following is a 126-amino-acid chain: Large-conductance mechanosensitive channel (126 aa).

2 consecutive transmembrane segments (helical) span residues 14 to 34 (VLDL…VKSL) and 69 to 89 (GAFL…FLLV).

It belongs to the MscL family. As to quaternary structure, homopentamer.

It is found in the cell membrane. In terms of biological role, channel that opens in response to stretch forces in the membrane lipid bilayer. May participate in the regulation of osmotic pressure changes within the cell. This Leuconostoc citreum (strain KM20) protein is Large-conductance mechanosensitive channel.